A 256-amino-acid polypeptide reads, in one-letter code: Thiazole synthase (256 aa).

The Schiff-base intermediate with DXP role is filled by Lys-95. Residues Gly-156, 182 to 183 (AG), and 204 to 205 (NT) contribute to the 1-deoxy-D-xylulose 5-phosphate site.

Belongs to the ThiG family. In terms of assembly, homotetramer. Forms heterodimers with either ThiH or ThiS.

The protein localises to the cytoplasm. The catalysed reaction is [ThiS sulfur-carrier protein]-C-terminal-Gly-aminoethanethioate + 2-iminoacetate + 1-deoxy-D-xylulose 5-phosphate = [ThiS sulfur-carrier protein]-C-terminal Gly-Gly + 2-[(2R,5Z)-2-carboxy-4-methylthiazol-5(2H)-ylidene]ethyl phosphate + 2 H2O + H(+). The protein operates within cofactor biosynthesis; thiamine diphosphate biosynthesis. Functionally, catalyzes the rearrangement of 1-deoxy-D-xylulose 5-phosphate (DXP) to produce the thiazole phosphate moiety of thiamine. Sulfur is provided by the thiocarboxylate moiety of the carrier protein ThiS. In vitro, sulfur can be provided by H(2)S. The protein is Thiazole synthase of Salmonella typhi.